Here is a 358-residue protein sequence, read N- to C-terminus: Sesquiterpene synthase Agr3 (358 aa).

The Mg(2+) site is built by aspartate 99, asparagine 246, serine 250, and glutamate 254. The DDXXD motif signature appears at 99 to 103; the sequence is DNISD. (2E,6E)-farnesyl diphosphate is bound by residues arginine 334 and tyrosine 335.

This sequence belongs to the terpene synthase family. It depends on Mg(2+) as a cofactor.

The enzyme catalyses (2E,6E)-farnesyl diphosphate = alpha-muurolene + diphosphate. The catalysed reaction is (2E,6E)-farnesyl diphosphate = gamma-muurolene + diphosphate. It catalyses the reaction (2E,6E)-farnesyl diphosphate = delta-cadinene + diphosphate. In terms of biological role, terpene cyclase that catalyzes the cyclization of farnesyl diphosphate (FPP) to various sesquiterpenes, including alpha-muurolene, gamma-muurolene, germacrene, delta-cadinene, delta-cadinol and cubenol. The chain is Sesquiterpene synthase Agr3 from Cyclocybe aegerita (Black poplar mushroom).